We begin with the raw amino-acid sequence, 271 residues long: MRKPVTPPGNPPRPRSPGYGSTSLAPGITAANSNTRISPPTLARPAPAAGAGGQGGNLGLNSDRLRHAMVQRLRTQGIVDERVLNAMAAVPRHLFVDEALASRAYEDAALPIGHSQTISQPWVVARMIAAACEDRNPTRVLEVGAGCGYQAAVLAQFVREVHAIERIRGLFELARGHLRALRLATRVRLIHGDGMLGLPGVAPFDAIVVAAAGLAIPQALLDQLAPGGRLIAPEGASNQRLVLIERTGTASWKRTELEAVRFVPLRAGIQS.

Pro residues predominate over residues 1–15 (MRKPVTPPGNPPRPR). A disordered region spans residues 1 to 60 (MRKPVTPPGNPPRPRSPGYGSTSLAPGITAANSNTRISPPTLARPAPAAGAGGQGGNLGL). Low complexity predominate over residues 39–49 (PPTLARPAPAA). Serine 119 is a catalytic residue.

It belongs to the methyltransferase superfamily. L-isoaspartyl/D-aspartyl protein methyltransferase family.

It localises to the cytoplasm. It catalyses the reaction [protein]-L-isoaspartate + S-adenosyl-L-methionine = [protein]-L-isoaspartate alpha-methyl ester + S-adenosyl-L-homocysteine. Its function is as follows. Catalyzes the methyl esterification of L-isoaspartyl residues in peptides and proteins that result from spontaneous decomposition of normal L-aspartyl and L-asparaginyl residues. It plays a role in the repair and/or degradation of damaged proteins. This chain is Protein-L-isoaspartate O-methyltransferase, found in Bordetella petrii (strain ATCC BAA-461 / DSM 12804 / CCUG 43448).